A 634-amino-acid polypeptide reads, in one-letter code: uncharacterized protein (634 aa).

This is an uncharacterized protein from Homo sapiens (Human).